The chain runs to 556 residues: Probable Xaa-Pro aminopeptidase SS1G_06948 (556 aa).

Positions 305, 316, 460, and 501 each coordinate Mn(2+).

It belongs to the peptidase M24B family. Mn(2+) serves as cofactor.

It catalyses the reaction Release of any N-terminal amino acid, including proline, that is linked to proline, even from a dipeptide or tripeptide.. Functionally, catalyzes the removal of a penultimate prolyl residue from the N-termini of peptides. This is Probable Xaa-Pro aminopeptidase SS1G_06948 from Sclerotinia sclerotiorum (strain ATCC 18683 / 1980 / Ss-1) (White mold).